Reading from the N-terminus, the 181-residue chain is Ribosome maturation factor RimP (181 aa).

The protein belongs to the RimP family.

Its subcellular location is the cytoplasm. Its function is as follows. Required for maturation of 30S ribosomal subunits. This chain is Ribosome maturation factor RimP, found in Mycolicibacterium smegmatis (strain ATCC 700084 / mc(2)155) (Mycobacterium smegmatis).